An 864-amino-acid polypeptide reads, in one-letter code: MSTPTTSGSAAKPTRPARSSSLATRSCSNSGSLTSFQAMVELKQKILTSISKLADRDTYQIAVEDLEKTIQSLTPETLPMFLNCLYDSCSDPKPAVKKECLHLLSYVCSLHCDSTAAHLTKIIAQIVKRLKDSDSGVRDACRDTIGALSGIYLKGKEEGTNTGSASLAVGLFVKPLFEAMGEQNKVVQSGASMCMARMVESAASPPVTSFQKLCPRICKLLSNSSFLAKASLLPVVSSLSQVGAIAPQSLESLLESIHDCLGSTDWVTRKAAAETLTALASHSSGLIKEKTDSTITVLETCRFDKIKPVRESVTEALQLWKKISGKYVDGASDDSKLSASEQLGSEKNGEKRSNLADLMKKEASDGSTLSPDSASKGKGCFPEKAVGLLKKKAPVLSDKDFNPEFFQRLERRQSVEVVVPRRCKNNDEEESGLDDLNAMGSSNRLKNTQADDKQVKGRFDGNGSQARTSGDDKAGVVNGKETPGHHAPVSNTDNQSEGSFTSNRGNWSAIQRQLLQLERQQTNLMNMLQEFIGGSHDSMVTLEGRVRGLERIVEDMARDLSISSGRRANLTAGFGKYNSFANYPTGKYNGRAPGERGSQTDGAMRGRMWNSDMADDWFIPPHAASRNGQAGPRRSPRSEQYENEHMGNGRRGWDNKASGTIRFGEGPSARSVWQASKDEATLEAIRVAGEDGAVPRPTRVAVAPEAEAMGDDDNEGQERDPIWVSWSNAMHSLRVGDIDAAYAEVLCAGDQHLVIKLMDKTGPSLDQMSNEIANEALNFISQFLLDHSLYDICLSWSQQLLELVLQDGADTFGVPMELKTEILYNLQDACSTMDPPEDWEGPAPEQLVVQLASVWEIDLQQFDK.

The segment at 1-26 (MSTPTTSGSAAKPTRPARSSSLATRS) is disordered. Residues 17–26 (ARSSSLATRS) show a composition bias toward polar residues. 5 HEAT repeats span residues 76-113 (ETLP…LHCD), 117-154 (AHLT…IYLK), 167-204 (LAVG…SAAS), 208-245 (TSFQ…VGAI), and 248-285 (QSLE…HSSG). Residues 329-353 (DGASDDSKLSASEQLGSEKNGEKRS) form a disordered region. Serine 414 carries the post-translational modification Phosphoserine. The interval 426–504 (NDEEESGLDD…QSEGSFTSNR (79 aa)) is disordered. A compositionally biased stretch (polar residues) spans 439–448 (MGSSNRLKNT). The segment covering 449 to 459 (QADDKQVKGRF) has biased composition (basic and acidic residues). A compositionally biased stretch (polar residues) spans 489–504 (VSNTDNQSEGSFTSNR). Residues 508 to 561 (SAIQRQLLQLERQQTNLMNMLQEFIGGSHDSMVTLEGRVRGLERIVEDMARDLS) adopt a coiled-coil conformation. Residues 615–670 (DDWFIPPHAASRNGQAGPRRSPRSEQYENEHMGNGRRGWDNKASGTIRFGEGPSAR) are disordered. The segment covering 636–654 (PRSEQYENEHMGNGRRGWD) has biased composition (basic and acidic residues).

In terms of assembly, interacts with WAV3. As to expression, expressed in roots, hypocotyls, stems, flowers, siliques, inflorescences, petioles, cotyledons, and leaves. Particularly present in root tips and shoot meristems.

Its subcellular location is the cytoplasm. It localises to the cytoskeleton. Functionally, plant-specific microtubule-associated protein (MAP) that regulates the orientation of cortical microtubules and the direction of organ growth. Determines microtubule organization by modulating microtubule severing. The protein is Microtubule-associated protein TORTIFOLIA1 of Arabidopsis thaliana (Mouse-ear cress).